Consider the following 325-residue polypeptide: D-alanine--D-alanine ligase (325 aa).

Positions 109 to 309 constitute an ATP-grasp domain; it reads KRVCKERMLP…FCTLLDQLIE (201 aa). ATP is bound at residue 136-191; the sequence is CRRLPFPMFVKPANLGSSVGISKAHDEQELEAAFSLAKQYDRKIIVERGIEGRELE. Mg(2+) contacts are provided by Asp-262, Glu-276, and Asn-278.

The protein belongs to the D-alanine--D-alanine ligase family. Mg(2+) is required as a cofactor. Requires Mn(2+) as cofactor.

The protein resides in the cytoplasm. The enzyme catalyses 2 D-alanine + ATP = D-alanyl-D-alanine + ADP + phosphate + H(+). The protein operates within cell wall biogenesis; peptidoglycan biosynthesis. Cell wall formation. This is D-alanine--D-alanine ligase from Solibacter usitatus (strain Ellin6076).